The chain runs to 333 residues: Photosystem II assembly lipoprotein Ycf48 (333 aa).

Residues 1–23 form the signal peptide; that stretch reads MTRFVSSAINLLLVLVLGVSLSG. A lipid anchor (N-palmitoyl cysteine) is attached at Cys-24. A lipid anchor (S-diacylglycerol cysteine) is attached at Cys-24.

It belongs to the Ycf48 family. Part of early PSII assembly complexes which includes D1 (psbA) and PsbI; not found in mature PSII. Binds to the lumenal side of PSII complexes. Interacts with YidC.

It localises to the cellular thylakoid membrane. Functionally, a factor required for optimal assembly of photosystem II (PSII), acting in the early stages of PSII assembly. Also plays a role in replacement of photodamaged D1 (psbA). Assists YidC in synthesis of chlorophyll-binding proteins. This Parasynechococcus marenigrum (strain WH8102) protein is Photosystem II assembly lipoprotein Ycf48.